The following is a 3953-amino-acid chain: Zinc finger protein 469 (3953 aa).

Disordered stretches follow at residues 1–274, 313–465, 512–672, 763–784, 869–1383, 1400–1461, 1575–1610, 1703–1864, 1884–1947, 1991–2030, 2070–2700, 2716–2915, 3001–3036, and 3072–3110; these read MPGE…VSFQ, WPEE…MFFN, EWQG…FPFP, GHQR…RVPA, ADEE…HSEL, PKPS…DLPV, LQRS…SQRR, SKTG…GASS, VSNT…TVEG, KTQG…TGPT, LTAA…TLGP, AGET…LSDS, EMPA…PGNT, and GPSF…PAKG. Residues 187–198 are compositionally biased toward polar residues; it reads PPSSFTSTNYTS. Pro residues-rich tracts occupy residues 202 to 211 and 324 to 335; these read TPRPPAPGPP and YPLPTQPAPSPL. A compositionally biased stretch (low complexity) spans 603-623; it reads STCSSLSPMSSSPANPSSEES. 2 stretches are compositionally biased toward pro residues: residues 768 to 780 and 896 to 911; these read PGPP…PAAP and KAPP…PQTP. A compositionally biased stretch (basic residues) spans 944-953; the sequence is QQRRGKQLKL. A compositionally biased stretch (gly residues) spans 963-975; the sequence is AAEGSGSGGGGRA. The segment covering 981 to 991 has biased composition (basic and acidic residues); that stretch reads RRNDGLGERPP. Residues 1005 to 1017 are compositionally biased toward low complexity; sequence RADPAPRVPRAAA. Basic residues-rich tracts occupy residues 1025–1042 and 1058–1070; these read SRRR…RKAR and KNRR…RRAG. The segment covering 1082–1093 has biased composition (basic and acidic residues); the sequence is PGAEDRRLREYD. Over residues 1094–1103 the composition is skewed to acidic residues; the sequence is FASESEEDEQ. Residues 1120–1137 are compositionally biased toward basic and acidic residues; the sequence is KRKEVELTQGPREDEPQK. Low complexity predominate over residues 1158-1177; the sequence is PGGSRPGPGRSPQARGPSRS. A compositionally biased stretch (basic and acidic residues) spans 1213-1229; it reads EETRPSLDFPQEAKEPE. 2 stretches are compositionally biased toward polar residues: residues 1278 to 1290 and 1333 to 1350; these read PKPS…TAPH and NPSS…SKIS. Residues 1577–1595 are compositionally biased toward basic and acidic residues; the sequence is RSKDTRGAPRELAEAESVG. Polar residues-rich tracts occupy residues 1991–2005 and 2014–2024; these read KTQG…QPEN and NHASVNASPKT. Residues 2243–2262 are compositionally biased toward basic and acidic residues; that stretch reads DTPKDSTLRIPEDSRKEKLW. Residues 2409–2435 show a composition bias toward polar residues; the sequence is TAPSSTASDFQSDSPQSHRNASHQTPQ. A C2H2-type 1 zinc finger spans residues 2472–2498; the sequence is VTCEVCAASFRSGPGLSRHKARKHRPH. Over residues 2488–2498 the composition is skewed to basic residues; it reads SRHKARKHRPH. The span at 2506–2521 shows a compositional bias: low complexity; sequence SPAALPAQQPLEPLAQ. Over residues 2534–2546 the composition is skewed to basic and acidic residues; that stretch reads SGKERPNHSRGDP. The span at 2565-2574 shows a compositional bias: low complexity; it reads PGSPHSQQLH. The segment covering 2592–2631 has biased composition (basic and acidic residues); sequence PRPDQAREDELHPKQAEKREGRRWRREPTVDSPSHSEGKS. A compositionally biased stretch (basic residues) spans 2632–2642; sequence NKKRGKLRGRR. Residues 2664–2676 show a composition bias toward low complexity; the sequence is PSPAMASYAASPS. Positions 2777–2787 are enriched in basic and acidic residues; sequence DSSRAHSRSEE. Over residues 2805-2816 the composition is skewed to low complexity; that stretch reads TSSSPADSTTSS. Basic residues predominate over residues 2869–2879; that stretch reads LTRKRNPHVYG. A compositionally biased stretch (low complexity) spans 3095 to 3105; sequence AAGAGRAQGRG. The C2H2-type 2 zinc-finger motif lies at 3115–3137; sequence YKCKVCFQRFRSLGELDLHKLAH. The tract at residues 3232 to 3322 is disordered; that stretch reads TEPAPKHHRG…PDPWAGGEPL (91 aa). Residues 3260–3272 show a composition bias toward basic and acidic residues; the sequence is GEAKKDSPGERAK. A compositionally biased stretch (pro residues) spans 3302–3314; sequence PGPPRTTPSPSPD. 2 consecutive C2H2-type zinc fingers follow at residues 3337–3359 and 3365–3388; these read RDCH…LAVH and YLCP…GGAH. Residues 3418-3442 form a C2H2-type 5; degenerate zinc finger; that stretch reads FACSSCNYTFAKKEQFDRHMNKHLR. 3 disordered regions span residues 3448–3501, 3518–3559, and 3576–3925; these read FAFR…PILS, STTK…SPFP, and ERPE…HRTA. Positions 3584–3602 are enriched in low complexity; the sequence is PGSPGPLLQQALPLGASLP. Basic and acidic residues predominate over residues 3633 to 3651; sequence CAPDHFQEDHLLQKEKEVS. Composition is skewed to low complexity over residues 3728–3741 and 3749–3759; these read PGPS…PRPG and QPQPASGQLQS. 2 stretches are compositionally biased toward basic and acidic residues: residues 3876–3892 and 3915–3925; these read EQRK…DRLG and EPAEPHTHRTA.

This sequence belongs to the krueppel C2H2-type zinc-finger protein family. In terms of tissue distribution, detected in cornea, sclera, skin fibroblasts and striated muscle.

It localises to the nucleus. May be involved in transcriptional regulation. The protein is Zinc finger protein 469 (ZNF469) of Homo sapiens (Human).